Here is a 7760-residue protein sequence, read N- to C-terminus: MNNIDHQNCERTVAADASEYRQGIAKVNSDFDLKAEKSRLFENPELASPVYHPGSAAMSVDESGTPRSASPLSSYTGSPGETRHLGTELSRTLSGDTLSDPKEASSSVQDDVNEKGEDCLFGPSLFDAADAKAGPQSSVGDRFKAQAEYWRTALAGAPALLDLPTDRPRPSHPSFEGDRVPFELNSKTTRALKELSQQQGVTLFLTILSAWSAVLSRLSGQDDIVIGTPSSSRTSEVDSLNGSATKMLALRVDLSGKPNTQELLDRVRRTTLSAFTHQDLSFEQVVEILQPPRKMDHTPLFQVLYSWRNHENSSDLATDAAKFDLTLDMWESDNSIRGSLGYSTALFDRSSIERHVGYLQAMLLEMTTDSELPVALAEILSLDERTFLLETLNVTAENHSDSQHLHQLFEQQAERRPHAIAVVHESESLTYSELNTRANRLAHHLIHVGVQPDSVVAICVERSLALIVGILAILKSGGAYVPLDPVHASERLVGILSDAAPSVLVADACGMKALQGADLSQLKMVDPTSTLPTSAANPRVPNLEMHHLAYVIYTSGTTGKPKGVMVEHRQIARLFATSATQFDFSEQDTWCLLHSAAFDFSIWEMWGALRQGGKLVVVSQDVVRTPHDLHQLLQEHAVTVLNMTPTAFKPLLEIDTANKLQAALRYLFLGGEALSPAMLKPWLLPQAERCPKIINLYGPTEISIYVTYSKVTLEDCSQATSSIGGRLPDMRAYVFDDFMRPMPRGVVGELYVGGPGVARGYLNRPELTAERFLRNPFAAGRDERVYRTGDLVKQLPNGSLLYMGRNDHQVKIRGFRIELGEIETRLVEYPLVSEAVVIATGDDSNRRLVAYVTVRSDEQAPVAESSSTDQLASSLRAHLATQLPEYMVPSAFVRMDAFPMTPNGKLDVQALPAPRESDFARQAYVPPQGELETAIASIWSELLQMQRVSRDDSFFALGGHSLLAVQVISKLHALGHSVSASVLFESPTLSAFAHAIGQHRAIVVPPNLITSDVARITPEMLPLIDLTQTDIDHIVEQVPGGLANIQDIYALAPLQEGILFHHLMHKTGDPYLLYYGRAFDNRALLDQYLVGMQQMVSRHDILRTAFFWEDLSTPAQVVLRSATLSTTELTLDPADGSAIEQLKQRLDPRYNRLDLTQAPLLHYTIAQDFDGRWILGEWLHHLLGDHSTLEHIELEIRAIQEGRGAELLAPHPYRNLIAQTRLGVSQDAHEQFFKAMLSDFDTPSLPFGITDVRGDGSNITESTRMLPADLNERLRFQAKRLGVSLASLCHVAWAQVIARTSGQQRVVFGTVLFGRMQAETSSEGAIGLYINTLPFRVDVDSRSVEESVQETHALLAKLLEHEHAPLALAQRCSDVEPGVPLFSSLLNYRHNMESPEHGSGMEFLGEVERTNYPYDLSIEDYGHSLGLTAQVVLPLVSDRACGYMQEALDSLASALEYNPKMPVSQLDVLPADERKLLTRGGRWTQEDDSYHVCLHELFEQYADRVPNALSVMTDKHSLTYAEMNAESNRLAHRLIDLGAKTDSVMGLCMERSSSMIVAMFGILKSGAAYLPLDPSYTGERLKDIVSDAAPTILVTDAVGRKALGELVTATMVVLDMSDLKGGDTSNPQVPGLHSGNLAYMIYTSGSTGKPKGVMVEHKGVASLAQYHSELIGIHEGSRMLQFASISFDFSVWEIFLTLCSGATLVLAPSSIRMDRNMLWNYMMRQSVTHATFTPSFLQDGVDFPCAIEPLTLTLGGEALGPTLLQNLIQQGIAVFNDYGPTESSISAATWKGSADFNGDVVPIGRPVRNSRLYVLDSQQEPVPLGAVGELYISGVGLARGYLNRPEQTAERFLQNPFGDNKSARMYRTGDLVRYLPDGDLVYLGRTDYQVKIRGFRIELGEIEVRLAEHAMVSEAFVLALGEGINKRLVAYLTTDPEVQIEALDTTSLPSLLRSHLSARLPEYMVPAAFVCLDAFPLTSNGKLDRKALPAPSEDDYARQAYEAPEGEVENAIASIWSELLHVKRVSRHDSFFALGGHSLLAVQVISRLHRLGHSVSVRTLFESPTLLALAQSIGEHRAIVVPPNVITPGVTHITPEMLPLIDLNQNDIDRIVDQIPGGVANIQDIYALSPLQDGILFHNLMHKVGDPYLLYTARAFDNREVLDQYLAATQQIMDRHDILRTAFMWENLSVPAQVVLRNASLPVTELTLDPADGPIVQQLKRRLDPRHNRIDLTQAPLLRFTIAQDSDGRWILGELLHHLTGDHSTLEVIEAELLAIQEGRGAELLAAHPYRNLIAQARLGVSQAAHEKFFKEMLSDFDTPSLPFGIKEVRGDGSNVTESGLTLPSKLNERLRFQAKRLGVSVASLCHVAWAQVIARTSGQQQVVFGTVLFGRMQAETSSDRAIGLYINTLPLRVDVDDRSVEECVQLTHSLLAKLLEHEHASLALAQRCSSVQPGVPLFNSLLNYRHNMDTAQHASSASGMELLESLERTNYPFTISVEDYGTSLGLTAQVAQPLESGRACGYMQEALDSLTTALETSAGMSVSRLNILPTEERQLLTQGGSTQKHDDSYRICLHELFEQHVDRAPDALSIICGDQSLTYADLNAYSNRLAHRLIDTGVKADSIVALCMERSPSMIVAMLAILKAGAAYLPLDPLYPSDRLQGIVTDAEPAVLVADAVGRKALGELSSVHHIEVDIDGLQDGNASNPQVSNVDFTKLAYVIYTSGSTGKPKGVMLEHQGVSSLVQYHRELLRVCEGSRMLQFASISFDFSVWEIFIILCSGATLVLAPSSMRMDRDMLWRYMDEVSVSHAACTPSFLQDGADLPPLTSPLTLALGGEALSPALLQNLIRQGINVFNLYGPTETSIATATWNCPTNFCGDIVPIGGPVRNARHYILDSQQLPVPMGAIGELFIGGIGLARGYLNRPEQTAERFLKDPFSEDEGARVYRTGDLVRQLPDGNLVYLGRADFQVKIRGFRIELGEIEARLVEHESVSEAVVVALGEGVEARLVAYFTRDHDGKSEAFDKSLLPSILRSHLSARLPDYMVPSAFVRMEAFPLLASGKLDRRSLPAPSEEDYARQAYEAPQGAVEAAIASVWSELLNVNRVSRHDSFFALGGHSLLAVQVISRLHGLGHSVSVRALFESPTLSALAQSIGEHRAIVVPSNVITLDSIRITPEMLPLIDLTQDDIDHIVEQVPGGVANIQDIYALAPLQDGILFHHLMHKVGDPYILYSATAFDNRASVDQYLAATQQIVDRHDILRTAFMWENLSTPTQVVLRNAPLSITELFLDTSKGPVVQQLQKRSDPRFHRMDLTQAPLLRFTVAQEDDGRWIVSQLLHHLIGDHSTLEVIELEMKAIKEGRAADLLAPHPYRNLIAQARLGVTQDAHEKFFKEMLSDFDTPSLPFGITDVRGDGSNVTESERDLSAELNERLRFQAKRLGVSLASLCHVAWAQVIARTSGQQQVVFGTVLFGRMQAETSSGQAMGLYINTLPLRVDVDNRSVEESVQQTHSRLAKLLEHEHASLTLAQRCSDVPPGAPLFSSLLNYRHNAEMPERGSNISGKEEVDSRERTNYPFSISVEDYGTALGLTAQTVQPLDSDRACGYMQEALDSLASALEHNPKMPVAHLNVLPAEERTLLLDTWNDTAEDYPEHLCLHQLFEQQAERTPDTLAVVCEDKSLTYRELEARSNGLAHHLIQLGVRTDDIVAICVKRSVEMIVGILAVLKAGGAYVPLDPFFASDRLKDIMSDAAPVVLLADEAGRTALGKSAVSDVVVVDPTLFTTKADSPPRVADLSSQNLAYVIYTSGTTGKPKGVMVEHQGVVNLVVSQQPLLNISTSSRFTQFLSISFDPSVWETFATLSFGGVLHVLQEDVRRDFRQLWAYLQLNQITHAIFTPAVIQDCEGLPPLESMSTLLIGGEALSGALVRRVGDLVPNAAIINEYGPTEASIAALSWTYVEGGLIGDDIVPIGHPLSSKRVYILDEFGLPLPLGVAGELYLGGVGVARGYLNRPDLSAEKFVMDPFSREPGARMYKTGDMAKYHTDGRVICLGRNDDQIKIRGFRVELGEIEARLVEYPQVSEAAVVPLGKGGNMRLVAYVIARDEGEVEQHSDRSQSASSTELATSLRTHLLAKLPDYMVPSAFVRLSSFPVTTNGKLDRRALPAPNEDDYAREAYEAPQGEVETALASIWCELLQLKRVSRNDSFFALGGHSLLAVRLVNRVSTLGATVAISTLFASPSLSAFASRVQEQLAQEESSVMAITPVSRDNDLPLSFAQQRLWFLAQLGGVSDTYHMPLALRLQGQVNQVALESSLSELCNRHEALRSVFVTVNGQAHVKILPPGGLSIRKVDLRGAADQEIQLRQWMDKETHASFDLEQGPLVRASLIQTQDDECVLLITQHHIVSDGWSVGIMLRELSQLYTAFCSGESSPLSPLRIQYPDYAAWQRKWLSGDQLKSQSEYWRTALSGAPVLLDLPTDHPRPAHQSFKGDRVTIAWDADITRAVKQLSQRHGVTLFMTILSAWSAVLSHLSGQDDVVIGTPNANRNHPEIESLIGFFVNTLALRIDLSGKPTTQELLERVRRSTLAALNHQDLPFEQVVEAVQPPRKMDHTPLFQVMFAWQNNEDDDLELPGLQVTPCDLDYDAAKFDLTLSLWEEDSGIGGNLEYSTALFDRTTIERHVGYVHAMLLAMTTDDEQPVAAAEILSQDERTLLLETLNVTAESQSDKSCLHQLFEQRVESTPDAIAVVHDEQTLTYGELNARANRLAHHLIQLGVKPDSLVAICVDRSLPMLVGVLAILKAGGAYVPLDPVHASSRLLDILDDVQSSVVLVDARGTKALQGSDLSHMNVVDLREPLSGPTHNPQVMDLSSNHLAYVIYTSGSTGKPKGVMVEHRQVARLFTATSVWFDISEQDTWCLLHSFAFDFSVWEIWGAFLYGGKLVVVSQDIARSPQELYRTICEQAVTVLNMTPSAFKQLIDIHSGEQLDDSLRYVVFGGEALAPAILKPWFHTHAQDRPKVVNMYGITETTVHVTYRLMTPEDCSQTTSPIGVRIPDLRTYVLNDCGRPVPLGVMGELFVGGAGVTRGYLNRPDLTADRFIPDPFVEGHEGRMYKTGDLVKQLPDGSLVYMGRNDHQVKIRGFRIELGEIEARLTDHARVIEAVVIPLGDERNKRLVAYVSIREGEMSEEDGDDAESSFAERLASTLRTHLSTRLPEYMIPSAFVHMASFPLTPSGKLDMRALPAPSEDNVARQAYEAPEGEVETAIASIWSELLQIERVSRHDSFFALGGHSLLAVQVISKLHRVGHSVSVRALFEAPTLAVFAASIGHHQAIVIPPNVITPSTTSITPEMLPLIDLTQTDIDHVVEHVPGGVSNIQDIYSLSPLQDGILFHHLMAKSGDPYLLYVAMRFDTREALDQHLAGMQLIVNRHDILRTAFMWENLSSPAQVVWRNAPITVMEMNLDPSEGPILQQMKERFDPLHYKIDLTQAPVLRFAVAQDIDNQWILVRLLHHLVEDNSTLKVLHSELQMFAENSNAVLPPAEPYRNLIAQARLGMSQQAHEKFFKAMLEDIDTPSLPFGMANVHGEGADVIVSDRMLPQSLNDRLRLQAKRLGVTVASLCHVAWAQVIARTSGQQRVVFGTVLFGRMQAETSADQAMGLYINTLPIRVDIDGRSVEDSVQQTHSLLAKLLEHEHAPLTLAQRCSGIPAGGPLFSSLLNYRHSEDDDEEESGEEDMELLDFQERINYPFGISVEDLGTSLGLTAQVAAPLDSYRVCGYMQEAMESLANALESNPKMAVAQLDVLPAEERTLLLETWNNSAEEYPDSLCLHHMFEQQSERTPEAVAVVYGDRSLTYGELNARANGLARHLVHYGIQPDERVAICVKRSPEMLVGIMAILKVGGAYVPLDPLFASDRLKDIINDAAPRILLADEAGRAALGKSIVSGLTAVDPTLFGADLGASPRVAGLSCRNLAYVIYTSGTTGKPKGVLVEHQGVVNLLTSRQKHQLVQPSSNLTQFFSYSFDASILEIFGSLSFGGTLHILQEDVRLDFHQLWTYMEKHEITHAALTPAVLQNCEGLSPLVSMSTLIIGGESLSEGMVRKVSELMPNAAVVNEYGPTEATVATLSWKYSNEGMIGHDLVPVGRPLSNKRVYLLDDQSRPVPLGAVGELYIGGAGIARGYLNRPDLTAEKFLVDPFASESGATMYRTGDLAKYHPDGNVICLGRNDDQVKIRGFRVELGEIEARLSEHPQVSEAVVVPLGEGSLLRLVAYIIARTEDVLEQNIDTAEPMQLSSSLRSHLATRLPDYMVPSAFVCLSALPLTSNGKLDRRALPAPSDDDYAREAYEAPQGEVETALALIWCELLQLKRVSRNDSFFALGGHSLLAVQVISRLHRLGHSVSVRALFDSPTLSALAQSIGQHHAIVVPPNYITPGVTRITPEMLPLIDLSQMDIDHIAERVPGGVANIQDIYALSPLQDGILFHHLMQKSGDPYLFFTARSFDTRLSLDMHLSAMQQIVDRHDILRTSFVWEGLSAPAQVVWRTAPLSITELDLDPAQGSAVQQLQERFDPRNNRIDLSQAPLLRLAVAQELDGRWILMELLHHTIGDHSTLETTEIELREIQEGRGADLLVPHPYRNLIAQARLGVSQEAHEKFFKEMLEDFDTPSLPFGIADIFGDGSQVTECHRMLPQSLNDRLRAQAKRLGVSVASMCHVAWAQVIAQTSGQQRVVFGTVLFGRMQAETSSDQAMGLYINTLPFRVDVNNATVEEGVHQAQSLLAKLLEHEHASLTLAQSCSGIPAGSPLFSSLLNYRHNSAELLEEASNNSEMDILNSQERTNYPLGLSVEDFGTSLGLTAQAVLPLDPSRICGYMQEALDNLASALEFNPTMTVAQLDTVPAEEHNLLLQAFNDTAEEHPSSLCLHRMFEHQVERTPAAIAVVHEDQSLTYSELNVRANRLAHHLIQLGVQVETLVAICVKRSPEMLIAILAVLKAGGAYVPLDPLYASDRLREMVSDAAPSVLIADDAGRKALGGPFVATLTVVDPSTAFAGDCSDPHVGGLTSNSLAYVIYTSGTSGTPKGVMVEHQGVVSLVSSRQKQLLVEPTSRMTLFFSVSFDPSLLEIFGTLGFGGALHILGDHIRQDRHLLWKYLEHHRITHAILTPAMLQEFDDSSSLTDMQTLLIGGEALSVRLARKARKIVSNGAVINEYGPTEASIAALSWRYAEHVLHEHTPIGRPFSNRRVYLLDAEGTPVPLGAIGEIYLGGLGVARGYLNRPDLTAERFVADPFSGVSGARMYKTGDLGKFLPDGNVVCLGRNDHQIKIRGYRIELGEIETKLAEHEMVSEVVVVTSGSDADRQLVAYVVANHEHQMTREVDAADSSSLAQLAATLRSYLSARLPDYMVPAAFVRLDALPLTPNGKLDRHALPAPLSHAFATEDYEEPRGAIENILAGIWAELLNIDRVGRNDGFFVLGGYSLLAVRMISRVRAMLGLDLSLRTLFEAPTIAELAPRLLATGVTQDESYDVLLPIKPQGSRPPLFCVHPVTGLSWCFTGLSAHLDSDQPLYGLQARGLIDNGNMASSLDEMVVDYIDQIRRVQPHGPYYLLGYSFGGLVAHTMAAYLEKQGEQVALVALMDTPADYRTMAPEDKDEKQREQSLIQAFSKNRDLYSPEMINPVLRKALQTVNINNNKLGRLQAPRVTGGDLLIFRATVMEDEGRALLDPNAWKPYVQGSIEVCDVDCAHDFMDTPEATVVVSQVLNQKLRQSHCCLQREE.

Disordered stretches follow at residues 42–115 and 161–180; these read ENPE…VNEK and LDLPTDRPRPSHPSFEGDRV. Polar residues predominate over residues 65-79; that stretch reads TPRSASPLSSYTGSP. A condensation 1 region spans residues 87–389; that stretch reads TELSRTLSGD…LSLDERTFLL (303 aa). A compositionally biased stretch (basic and acidic residues) spans 164–180; that stretch reads PTDRPRPSHPSFEGDRV. Residues 409-813 form an adenylation 1 region; the sequence is FEQQAERRPH…GRNDHQVKIR (405 aa). Positions 926 to 1000 constitute a Carrier 1 domain; that stretch reads PPQGELETAI…AFAHAIGQHR (75 aa). S961 carries the post-translational modification O-(pantetheine 4'-phosphoryl)serine. A dual epimerase/condensation (E/C) domain 1 region spans residues 1046–1477; the sequence is QDIYALAPLQ…VLPADERKLL (432 aa). An adenylation 2 region spans residues 1498–1893; that stretch reads FEQYADRVPN…GRTDYQVKIR (396 aa). Positions 2003–2077 constitute a Carrier 2 domain; sequence APEGEVENAI…ALAQSIGEHR (75 aa). The residue at position 2038 (S2038) is an O-(pantetheine 4'-phosphoryl)serine. The segment at 2099 to 2558 is dual epimerase/condensation (E/C) domain 2; it reads PLIDLNQNDI…LPTEERQLLT (460 aa). Residues 2578–2973 form an adenylation 3 region; that stretch reads FEQHVDRAPD…GRADFQVKIR (396 aa). The region spanning 3083-3157 is the Carrier 3 domain; that stretch reads APQGAVEAAI…ALAQSIGEHR (75 aa). S3118 bears the O-(pantetheine 4'-phosphoryl)serine mark. A dual epimerase/condensation (E/C) domain 3 region spans residues 3203-3634; sequence QDIYALAPLQ…HLNVLPAEER (432 aa). Positions 3658–4057 are adenylation 4; it reads FEQQAERTPD…GRNDDQIKIR (400 aa). One can recognise a Carrier 4 domain in the interval 4174–4248; it reads APQGEVETAL…AFASRVQEQL (75 aa). At S4209 the chain carries O-(pantetheine 4'-phosphoryl)serine. The condensation 2 stretch occupies residues 4267–4705; sequence LPLSFAQQRL…AAEILSQDER (439 aa). The adenylation 5 stretch occupies residues 4729-5133; the sequence is FEQRVESTPD…GRNDHQVKIR (405 aa). Residues 5250–5324 enclose the Carrier 5 domain; sequence APEGEVETAI…VFAASIGHHQ (75 aa). Residue S5285 is modified to O-(pantetheine 4'-phosphoryl)serine. The interval 5370-5804 is dual dehydration/condensation (C*) domain; the sequence is QDIYSLSPLQ…VLPAEERTLL (435 aa). Positions 5825–6224 are adenylation 6; the sequence is FEQQSERTPE…GRNDDQVKIR (400 aa). Residues 6338 to 6412 enclose the Carrier 6 domain; sequence APQGEVETAL…ALAQSIGQHH (75 aa). S6373 bears the O-(pantetheine 4'-phosphoryl)serine mark. The interval 6458-6890 is dual epimerase/condensation (E/C) domain 4; sequence QDIYALSPLQ…QLDTVPAEEH (433 aa). Residues 6914–7300 are adenylation 7; the sequence is FEHQVERTPA…KFLPDGNVVC (387 aa). The Carrier 7 domain maps to 7428 to 7503; the sequence is EPRGAIENIL…ELAPRLLATG (76 aa). At S7463 the chain carries O-(pantetheine 4'-phosphoryl)serine. Residues 7561–7722 form a thioesterase (TE) domain region; it reads DNGNMASSLD…KPYVQGSIEV (162 aa).

The protein belongs to the NRP synthetase family.

Heptamodular nonribosomal peptide synthetase that catalyzes the biosynthesis of malpinins, natural products that show biosurfactant activities. Malpinins are acetylated hexapeptides (Ac-D-Leu/Val-D-Arg-D-Leu/Val-L-Phe/Leu-Dhb-D-Trp) containing a non-canonical amino acid derived from dehydration of L-Trp, (Z)-dehydrobutyrine (Dhb), at position 5, as well as a C-terminal D-amino acid, D-tryptophan, that can be oxidized to kynurenine. Incorporated D-amino acids in positions 1, 3 and 4 are variable resulting in the malpinin A-congeners malpinin B to E. Both modules M1 and M3 have relaxed specificity towards aliphatic amino acids (L-Leu &gt; L-Met &gt; L/D-Val &gt; L-Cys), explaining Val at position 1 and 3 in malpinin A-congeners malpinin B to D. The incorporation of L-Leu, but not N-acetyl-L-Leu by module 1 suggests the N-terminal acetylation occurs at a later stage of biosynthesis. Similar to M1 and M3, M4 has a broad substrate spectrum showing the highest activity with L-Phe followed by other hydrophobic amino acids (L-Phe &gt; L-Met = L-Trp). In contrast, M2, M5 and M6 are highly specific for L-Arg, L-Thr, and L-Trp, respectively. Solely, M7 converted its preferred substrate (L-Phe) with a 15 000-fold reduced turnover rate compared to the most active module M6, indicating that its A domain cannot contribute to the malpinin biosynthesis due to low activity. Since the last T domain in malA is apparently not loaded with an amino acid, either the TE domain must offload the oligopeptide from the preceding T domain or the dual E/C domain of M7 must transfer the final peptide chain to the free acceptor T domain of M7 prior to release. The protein is Malpinin synthetase of Mortierella alpina (Oleaginous fungus).